Here is a 207-residue protein sequence, read N- to C-terminus: LexA repressor (207 aa).

Positions Arg28 to Lys48 form a DNA-binding region, H-T-H motif. Catalysis depends on for autocatalytic cleavage activity residues Ser124 and Lys161.

The protein belongs to the peptidase S24 family. As to quaternary structure, homodimer.

It catalyses the reaction Hydrolysis of Ala-|-Gly bond in repressor LexA.. Represses a number of genes involved in the response to DNA damage (SOS response), including recA and lexA. In the presence of single-stranded DNA, RecA interacts with LexA causing an autocatalytic cleavage which disrupts the DNA-binding part of LexA, leading to derepression of the SOS regulon and eventually DNA repair. The protein is LexA repressor of Aeromonas salmonicida (strain A449).